A 401-amino-acid chain; its full sequence is Imidazolonepropionase (401 aa).

2 residues coordinate Fe(3+): histidine 66 and histidine 68. Zn(2+)-binding residues include histidine 66 and histidine 68. 4-imidazolone-5-propanoate is bound by residues arginine 75, tyrosine 138, and histidine 171. Position 138 (tyrosine 138) interacts with N-formimidoyl-L-glutamate. Histidine 236 lines the Fe(3+) pocket. Position 236 (histidine 236) interacts with Zn(2+). Residue glutamine 239 participates in 4-imidazolone-5-propanoate binding. Aspartate 311 serves as a coordination point for Fe(3+). Residue aspartate 311 coordinates Zn(2+). N-formimidoyl-L-glutamate is bound by residues asparagine 313 and glycine 315. Threonine 316 serves as a coordination point for 4-imidazolone-5-propanoate.

This sequence belongs to the metallo-dependent hydrolases superfamily. HutI family. Zn(2+) serves as cofactor. It depends on Fe(3+) as a cofactor.

It is found in the cytoplasm. The catalysed reaction is 4-imidazolone-5-propanoate + H2O = N-formimidoyl-L-glutamate. It functions in the pathway amino-acid degradation; L-histidine degradation into L-glutamate; N-formimidoyl-L-glutamate from L-histidine: step 3/3. Its function is as follows. Catalyzes the hydrolytic cleavage of the carbon-nitrogen bond in imidazolone-5-propanoate to yield N-formimidoyl-L-glutamate. It is the third step in the universal histidine degradation pathway. This is Imidazolonepropionase from Acinetobacter baumannii (strain AB307-0294).